A 196-amino-acid polypeptide reads, in one-letter code: Probable malonic semialdehyde reductase RutE (196 aa).

This sequence belongs to the nitroreductase family. HadB/RutE subfamily. FMN is required as a cofactor.

The catalysed reaction is 3-hydroxypropanoate + NADP(+) = 3-oxopropanoate + NADPH + H(+). Its function is as follows. May reduce toxic product malonic semialdehyde to 3-hydroxypropionic acid, which is excreted. The sequence is that of Probable malonic semialdehyde reductase RutE from Escherichia coli O45:K1 (strain S88 / ExPEC).